The primary structure comprises 317 residues: tRNA dimethylallyltransferase (317 aa).

Residue 19 to 26 (GPTASGKS) participates in ATP binding. 21–26 (TASGKS) lines the substrate pocket. An interaction with substrate tRNA region spans residues 44–47 (DSMQ).

The protein belongs to the IPP transferase family. In terms of assembly, monomer. Mg(2+) serves as cofactor.

The catalysed reaction is adenosine(37) in tRNA + dimethylallyl diphosphate = N(6)-dimethylallyladenosine(37) in tRNA + diphosphate. Catalyzes the transfer of a dimethylallyl group onto the adenine at position 37 in tRNAs that read codons beginning with uridine, leading to the formation of N6-(dimethylallyl)adenosine (i(6)A). The protein is tRNA dimethylallyltransferase of Methylorubrum populi (strain ATCC BAA-705 / NCIMB 13946 / BJ001) (Methylobacterium populi).